The following is a 228-amino-acid chain: Protein K8.1 (228 aa).

The signal sequence occupies residues 1–26 (MSSTQIRTEIPVALLILCLCLVACHA). N-linked (GlcNAc...) asparagine; by host glycans are attached at residues asparagine 55, asparagine 60, asparagine 70, and asparagine 85. The segment at 77 to 113 (GSPSSEYPNVSVSVEDTSASGSGEDAIDESGSGEEER) is disordered. The segment covering 78-97 (SPSSEYPNVSVSVEDTSASG) has biased composition (polar residues). The helical transmembrane segment at 197–217 (LYILWAVGLLLGLVLILYLCV) threads the bilayer.

It is found in the host membrane. This chain is Protein K8.1 (K8.1), found in Human herpesvirus 8 type P (isolate GK18) (HHV-8).